An 887-amino-acid polypeptide reads, in one-letter code: Transcriptional regulator DEF1 (887 aa).

Residues 1–13 (MERRQFNTSNIRN) show a composition bias toward polar residues. Disordered regions lie at residues 1-117 (MERR…IQPG), 203-293 (KRSL…ESNA), 311-330 (NNET…PRQL), 350-542 (PVLG…QQAQ), 555-578 (NRPP…PQQK), 614-675 (QAPQ…QVPK), 696-758 (QRTL…TQEQ), and 813-887 (NNAN…NLLN). Positions 57-75 (SSSQSNSVQNQDQSEDQSQ) are enriched in low complexity. Over residues 76–107 (LPQQESNTQQESNTQQESNTPSPRASNTSTET) the composition is skewed to polar residues. Positions 199-234 (EEMRKRSLENSRKRELEEAQEREESNKRQHTESSAE) form a coiled coil. Over residues 203–231 (KRSLENSRKRELEEAQEREESNKRQHTES) the composition is skewed to basic and acidic residues. Positions 232–254 (SAEPNAESSTESTTESNAESGAE) are enriched in low complexity. A compositionally biased stretch (polar residues) spans 261 to 270 (AESTTESNVE). The span at 311-326 (NNETNNTGESNSTSQQ) shows a compositional bias: low complexity. Residues 364–393 (KTSLTGSQNKVHSTNTQQSQKHPQQILTNS) are compositionally biased toward polar residues. Low complexity-rich tracts occupy residues 399 to 408 (QQYSAQSQQQ), 428 to 456 (QQQQ…QQEL), 475 to 519 (QQQS…QVQT), and 526 to 542 (QPQT…QQAQ). The span at 622-640 (YQHHYQQVQQRQNQQPYMQ) shows a compositional bias: low complexity. Polar residues predominate over residues 641 to 658 (SAPTYQQPHVQTPKSTRS). Residues 696 to 710 (QRTLDNGREPERLRT) are compositionally biased toward basic and acidic residues. Residues 729–745 (RSKQSSNQKPVVKQQSS) are compositionally biased toward polar residues. A compositionally biased stretch (low complexity) spans 829–844 (TNTRGGRASTRSSGRP). A compositionally biased stretch (polar residues) spans 865–887 (TDGSQSQNSGKASKISNIRNLLN).

The protein resides in the nucleus. Functionally, transcriptional regulator involved in extension of germ tubes into elongated hyphae and maintenance of filamentous growth. Regulates expression of UME6. Acts in a pathway that regulates maintenance of hyphal growth by repressing hyphal-to-yeast transition and allows dissemination within host epithelial tissues. Dispensable for invasion into both host oral epithelial cells and enterocytes, but required for epithelial damage. This is Transcriptional regulator DEF1 (DEF1) from Candida albicans (strain SC5314 / ATCC MYA-2876) (Yeast).